The following is a 308-amino-acid chain: Tetraacyldisaccharide 4'-kinase (308 aa).

63-70 provides a ligand contact to ATP; the sequence is SFGGNGKT.

Belongs to the LpxK family.

The catalysed reaction is a lipid A disaccharide + ATP = a lipid IVA + ADP + H(+). Its pathway is glycolipid biosynthesis; lipid IV(A) biosynthesis; lipid IV(A) from (3R)-3-hydroxytetradecanoyl-[acyl-carrier-protein] and UDP-N-acetyl-alpha-D-glucosamine: step 6/6. Transfers the gamma-phosphate of ATP to the 4'-position of a tetraacyldisaccharide 1-phosphate intermediate (termed DS-1-P) to form tetraacyldisaccharide 1,4'-bis-phosphate (lipid IVA). This chain is Tetraacyldisaccharide 4'-kinase, found in Campylobacter jejuni subsp. jejuni serotype O:6 (strain 81116 / NCTC 11828).